The following is a 160-amino-acid chain: Cytochrome b6-f complex subunit 4 (160 aa).

3 helical membrane passes run 36–56 (LLYV…ALAV), 95–115 (LLGV…PFIE), and 131–151 (TVFL…ALPL).

Belongs to the cytochrome b family. PetD subfamily. In terms of assembly, the 4 large subunits of the cytochrome b6-f complex are cytochrome b6, subunit IV (17 kDa polypeptide, PetD), cytochrome f and the Rieske protein, while the 4 small subunits are PetG, PetL, PetM and PetN. The complex functions as a dimer.

The protein localises to the cellular thylakoid membrane. In terms of biological role, component of the cytochrome b6-f complex, which mediates electron transfer between photosystem II (PSII) and photosystem I (PSI), cyclic electron flow around PSI, and state transitions. The protein is Cytochrome b6-f complex subunit 4 of Nostoc punctiforme (strain ATCC 29133 / PCC 73102).